A 284-amino-acid chain; its full sequence is Formamidopyrimidine-DNA glycosylase (284 aa).

Catalysis depends on proline 2, which acts as the Schiff-base intermediate with DNA. Glutamate 3 (proton donor) is an active-site residue. Lysine 61 functions as the Proton donor; for beta-elimination activity in the catalytic mechanism. Residues histidine 95, arginine 115, and arginine 157 each contribute to the DNA site. The FPG-type zinc-finger motif lies at 243–277; it reads AVYGRAGQPCRRCGTAIVREPFMNRSSFRCPACQP. Arginine 267 acts as the Proton donor; for delta-elimination activity in catalysis.

This sequence belongs to the FPG family. In terms of assembly, monomer. Zn(2+) is required as a cofactor.

It catalyses the reaction Hydrolysis of DNA containing ring-opened 7-methylguanine residues, releasing 2,6-diamino-4-hydroxy-5-(N-methyl)formamidopyrimidine.. The catalysed reaction is 2'-deoxyribonucleotide-(2'-deoxyribose 5'-phosphate)-2'-deoxyribonucleotide-DNA = a 3'-end 2'-deoxyribonucleotide-(2,3-dehydro-2,3-deoxyribose 5'-phosphate)-DNA + a 5'-end 5'-phospho-2'-deoxyribonucleoside-DNA + H(+). Its function is as follows. Involved in base excision repair of DNA damaged by oxidation or by mutagenic agents. Acts as a DNA glycosylase that recognizes and removes damaged bases. Has a preference for oxidized purines, such as 7,8-dihydro-8-oxoguanine (8-oxoG). Has AP (apurinic/apyrimidinic) lyase activity and introduces nicks in the DNA strand. Cleaves the DNA backbone by beta-delta elimination to generate a single-strand break at the site of the removed base with both 3'- and 5'-phosphates. This chain is Formamidopyrimidine-DNA glycosylase, found in Acidothermus cellulolyticus (strain ATCC 43068 / DSM 8971 / 11B).